The sequence spans 451 residues: Probable plasmid replicative DNA helicase (451 aa).

Residues 194 to 451 form the SF4 helicase domain; it reads NDSFYDGLPT…SKFSAIKKVW (258 aa). 225-232 lines the ATP pocket; the sequence is ARPSIGKT.

This sequence belongs to the helicase family. DnaB subfamily. As to quaternary structure, homohexamer.

The enzyme catalyses Couples ATP hydrolysis with the unwinding of duplex DNA at the replication fork by translocating in the 5'-3' direction. This creates two antiparallel DNA single strands (ssDNA). The leading ssDNA polymer is the template for DNA polymerase III holoenzyme which synthesizes a continuous strand.. The catalysed reaction is ATP + H2O = ADP + phosphate + H(+). A replicative DNA helicase, it participates in initiation and elongation during DNA replication. Travels ahead of the DNA replisome, separating dsDNA into templates for DNA synthesis. A processive ATP-dependent 5'-3' DNA helicase it has DNA-dependent ATPase activity. This Chlamydia muridarum (strain MoPn / Nigg) protein is Probable plasmid replicative DNA helicase.